Consider the following 477-residue polypeptide: Glycogen synthase (477 aa).

Lysine 15 lines the ADP-alpha-D-glucose pocket.

This sequence belongs to the glycosyltransferase 1 family. Bacterial/plant glycogen synthase subfamily.

It catalyses the reaction [(1-&gt;4)-alpha-D-glucosyl](n) + ADP-alpha-D-glucose = [(1-&gt;4)-alpha-D-glucosyl](n+1) + ADP + H(+). Its pathway is glycan biosynthesis; glycogen biosynthesis. Synthesizes alpha-1,4-glucan chains using ADP-glucose. In Escherichia coli O139:H28 (strain E24377A / ETEC), this protein is Glycogen synthase.